Reading from the N-terminus, the 558-residue chain is Dihydroxy-acid dehydratase (558 aa).

Residue aspartate 78 participates in Mg(2+) binding. Cysteine 119 provides a ligand contact to [2Fe-2S] cluster. Mg(2+) is bound by residues aspartate 120 and lysine 121. Position 121 is an N6-carboxylysine (lysine 121). Cysteine 192 serves as a coordination point for [2Fe-2S] cluster. Glutamate 445 lines the Mg(2+) pocket. Serine 471 (proton acceptor) is an active-site residue.

Belongs to the IlvD/Edd family. In terms of assembly, homodimer. [2Fe-2S] cluster serves as cofactor. The cofactor is Mg(2+).

It carries out the reaction (2R)-2,3-dihydroxy-3-methylbutanoate = 3-methyl-2-oxobutanoate + H2O. The enzyme catalyses (2R,3R)-2,3-dihydroxy-3-methylpentanoate = (S)-3-methyl-2-oxopentanoate + H2O. It functions in the pathway amino-acid biosynthesis; L-isoleucine biosynthesis; L-isoleucine from 2-oxobutanoate: step 3/4. It participates in amino-acid biosynthesis; L-valine biosynthesis; L-valine from pyruvate: step 3/4. Its function is as follows. Functions in the biosynthesis of branched-chain amino acids. Catalyzes the dehydration of (2R,3R)-2,3-dihydroxy-3-methylpentanoate (2,3-dihydroxy-3-methylvalerate) into 2-oxo-3-methylpentanoate (2-oxo-3-methylvalerate) and of (2R)-2,3-dihydroxy-3-methylbutanoate (2,3-dihydroxyisovalerate) into 2-oxo-3-methylbutanoate (2-oxoisovalerate), the penultimate precursor to L-isoleucine and L-valine, respectively. The chain is Dihydroxy-acid dehydratase from Akkermansia muciniphila (strain ATCC BAA-835 / DSM 22959 / JCM 33894 / BCRC 81048 / CCUG 64013 / CIP 107961 / Muc).